Consider the following 270-residue polypeptide: Phospholipase A and acyltransferase 5 (270 aa).

Disordered stretches follow at residues 1-54 (MGLS…SASS) and 70-122 (RRLE…NPRP). Composition is skewed to polar residues over residues 24–54 (TQIS…SASS) and 100–116 (IPTS…NQAV). The region spanning 127–240 (LIEIFRIGYE…LRYGVPRSQQ (114 aa)) is the LRAT domain. Residues histidine 137 and histidine 149 contribute to the active site. Cysteine 224 functions as the Acyl-thioester intermediate in the catalytic mechanism.

Belongs to the H-rev107 family. Isoform 4 shows highest expression level in testis.

The protein resides in the cytoplasm. It is found in the cytosol. It carries out the reaction a 1,2-diacyl-sn-glycero-3-phosphocholine + H2O = a 1-acyl-sn-glycero-3-phosphocholine + a fatty acid + H(+). The enzyme catalyses a 1,2-diacyl-sn-glycero-3-phosphocholine + H2O = a 2-acyl-sn-glycero-3-phosphocholine + a fatty acid + H(+). It catalyses the reaction 1-hexadecanoyl-2-(5Z,8Z,11Z,14Z-eicosatetraenoyl)-sn-glycero-3-phosphocholine + 1,2-di-(9Z-octadecenoyl)-sn-glycero-3-phosphoethanolamine = N-(5Z,8Z,11Z,14Z-eicosatetraenoyl)-1,2-di-(9Z-octadecenoyl)-sn-glycero-3-phosphoethanolamine + 1-hexadecanoyl-sn-glycero-3-phosphocholine + H(+). The catalysed reaction is 1,2-di-(9Z-octadecenoyl)-sn-glycero-3-phosphoethanolamine + 1,2-dihexadecanoyl-sn-glycero-3-phosphocholine = N-hexadecanoyl-1,2-di-(9Z-octadecenoyl)-sn-glycero-3-phosphoethanolamine + 1-hexadecanoyl-sn-glycero-3-phosphocholine + H(+). It carries out the reaction 1,2-di-(9Z-octadecenoyl)-sn-glycero-3-phosphoethanolamine + 1,2-dihexadecanoyl-sn-glycero-3-phosphocholine = N-hexadecanoyl-1,2-di-(9Z-octadecenoyl)-sn-glycero-3-phosphoethanolamine + 2-hexadecanoyl-sn-glycero-3-phosphocholine + H(+). The enzyme catalyses a 1,2-diacyl-sn-glycero-3-phosphoethanolamine + a 1,2-diacyl-sn-glycero-3-phosphocholine = an N-acyl-1,2-diacyl-sn-glycero-3-phosphoethanolamine + a 1-acyl-sn-glycero-3-phosphocholine + H(+). It catalyses the reaction a 1,2-diacyl-sn-glycero-3-phosphoethanolamine + a 1,2-diacyl-sn-glycero-3-phosphocholine = an N-acyl-1,2-diacyl-sn-glycero-3-phosphoethanolamine + a 2-acyl-sn-glycero-3-phosphocholine + H(+). The catalysed reaction is 1-hexadecanoyl-2-(9Z-octadecenoyl)-sn-glycero-3-phosphocholine + 1,2-di-(9Z-octadecenoyl)-sn-glycero-3-phosphoethanolamine = N,1,2-tri-(9Z-octadecenoyl)-sn-glycero-3-phosphoethanolamine + 1-hexadecanoyl-sn-glycero-3-phosphocholine + H(+). In terms of biological role, exhibits both phospholipase A1/2 and acyltransferase activities. Shows phospholipase A1 (PLA1) and A2 (PLA2) activity, catalyzing the calcium-independent release of fatty acids from the sn-1 or sn-2 position of glycerophospholipids. Shows N-acyltransferase activity, catalyzing the calcium-independent transfer of a fatty acyl group at the sn-1 position of phosphatidylcholine (PC) and other glycerophospholipids to the primary amine of phosphatidylethanolamine (PE), forming N-acylphosphatidylethanolamine (NAPE), which serves as precursor for N-acylethanolamines (NAEs). This is Phospholipase A and acyltransferase 5 from Mus musculus (Mouse).